Consider the following 352-residue polypeptide: Spermidine/putrescine import ATP-binding protein PotA (352 aa).

The region spanning 7-237 (IRLENVTKSF…PVNAFVADFI (231 aa)) is the ABC transporter domain. Residue 39–46 (GPSGCGKT) participates in ATP binding.

Belongs to the ABC transporter superfamily. Spermidine/putrescine importer (TC 3.A.1.11.1) family. In terms of assembly, the complex is composed of two ATP-binding proteins (PotA), two transmembrane proteins (PotB and PotC) and a solute-binding protein (PotD).

Its subcellular location is the cell membrane. It catalyses the reaction ATP + H2O + polyamine-[polyamine-binding protein]Side 1 = ADP + phosphate + polyamineSide 2 + [polyamine-binding protein]Side 1.. Part of the ABC transporter complex PotABCD involved in spermidine/putrescine import. Responsible for energy coupling to the transport system. This Acetivibrio thermocellus (strain ATCC 27405 / DSM 1237 / JCM 9322 / NBRC 103400 / NCIMB 10682 / NRRL B-4536 / VPI 7372) (Clostridium thermocellum) protein is Spermidine/putrescine import ATP-binding protein PotA.